Consider the following 118-residue polypeptide: Ribonuclease P protein component (118 aa).

This sequence belongs to the RnpA family. As to quaternary structure, consists of a catalytic RNA component (M1 or rnpB) and a protein subunit.

The catalysed reaction is Endonucleolytic cleavage of RNA, removing 5'-extranucleotides from tRNA precursor.. RNaseP catalyzes the removal of the 5'-leader sequence from pre-tRNA to produce the mature 5'-terminus. It can also cleave other RNA substrates such as 4.5S RNA. The protein component plays an auxiliary but essential role in vivo by binding to the 5'-leader sequence and broadening the substrate specificity of the ribozyme. In Desulfatibacillum aliphaticivorans, this protein is Ribonuclease P protein component.